We begin with the raw amino-acid sequence, 244 residues long: Phosphoadenosine 5'-phosphosulfate reductase (244 aa).

The active-site Nucleophile; cysteine thiosulfonate intermediate is the cysteine 239.

The protein belongs to the PAPS reductase family. CysH subfamily.

The protein resides in the cytoplasm. The enzyme catalyses [thioredoxin]-disulfide + sulfite + adenosine 3',5'-bisphosphate + 2 H(+) = [thioredoxin]-dithiol + 3'-phosphoadenylyl sulfate. It participates in sulfur metabolism; hydrogen sulfide biosynthesis; sulfite from sulfate: step 3/3. Catalyzes the formation of sulfite from phosphoadenosine 5'-phosphosulfate (PAPS) using thioredoxin as an electron donor. This chain is Phosphoadenosine 5'-phosphosulfate reductase, found in Salmonella agona (strain SL483).